Here is a 633-residue protein sequence, read N- to C-terminus: MTNWSSKDSLKVYNVPYWGAGFFNINDAGHVTVAPDKSRPDAHIVISDAIEQLRQSGLTTPVLLRFPDILKSRVDALFNAFGQAIEKSGYEGDYLCVYPIKVNQQSRVIETISQSYSDKPRLGLEAGSKPELLAVLSHHHEQGSVIVCNGYKDREYIRHALLGNLMGHKVYIVVEKPSELEMVLDESARLNIKPNIGVRAKLASTGSGMWESSGGSMSKFGLSASQILALVERLRSLDKLDCLQLLHFHLGSQIANIRDIQGGIRECGRFYSELRRLGVPIDVVDVGGGLGVDYEGTRSQSHCSANYSLSEYANNVVWGIGDVCREFDLPYPTIISESGRALTAHHAVLVTNLIGAEGVEMSDISAPDEDAPTLLQNMWQGWLDLRGEDPSLLEIFHDSVADLGDVNTQYTMGLLNLEQRAWAEMLHQNTCLALKEMLNPVNRNHRALADELSEKLADKCFANFSLFQSLPDAWGIGQVFPVMPLTGLDRPLSRRGILMDITCDSDGQVEHYVDGLGVESTLPMPQYEENEVCYVGFFLVGAYQEILGDLHNLFGDTHCAEVCLDEEGKMDIRNVVRGDTVDQLLRYVNIDPSVIRENYQRIVSHPALDDATRKALLDELELGLQGYAYLEDE.

K101 bears the N6-(pyridoxal phosphate)lysine mark. V284–Y294 is a binding site for substrate.

It belongs to the Orn/Lys/Arg decarboxylase class-II family. SpeA subfamily. The cofactor is Mg(2+). Requires pyridoxal 5'-phosphate as cofactor.

The catalysed reaction is L-arginine + H(+) = agmatine + CO2. It functions in the pathway amine and polyamine biosynthesis; agmatine biosynthesis; agmatine from L-arginine: step 1/1. Its function is as follows. Catalyzes the biosynthesis of agmatine from arginine. This is Biosynthetic arginine decarboxylase from Aeromonas salmonicida (strain A449).